Here is a 790-residue protein sequence, read N- to C-terminus: SH3 domain-containing protein 19 (790 aa).

Disordered regions lie at residues 21–196 (EGQT…PVLQ) and 241–374 (EPIK…MDLQ). Serine 65 is modified (phosphoserine). Over residues 287 to 296 (NTFSTVSGKL) the composition is skewed to polar residues. A compositionally biased stretch (pro residues) spans 336 to 351 (QQPPTKVPPERPPPPK). The interaction with SH3GL1 stretch occupies residues 342 to 358 (VPPERPPPPKLSATRRS). Positions 365–374 (NRSSSDMDLQ) are enriched in polar residues. Position 369 is a phosphoserine (serine 369). SH3 domains lie at 415-477 (LSVP…PLDE), 495-554 (SGAP…VIID), 571-630 (VKGS…PVED), 661-720 (LPAE…PCPA), and 730-789 (PKGR…FLQI). Serine 762 carries the phosphoserine modification.

As to quaternary structure, interacts with ADAM12. Isoform 4 and isoform 5 (but not isoform 1 and isoform 2) interact with ADAM9, ADAM10, ADAM15 and ADAM17. Interacts with SH3GL1 SH3 domain. Interacts via SH3 3 and SH3 4 or SH3 4 and SH3 5 domains with SOS2. Probably forms a trimeric complex with SH3GL1 and SOS2. Interacts with SH3YL1. As to expression, widely expressed with highest levels in heart, skeletal muscle, kidney, liver, placenta, small intestine and lung. Expressed at low levels in colon, thymus, spleen and leukocytes.

Its subcellular location is the cytoplasm. It localises to the nucleus. Its function is as follows. May play a role in regulating A disintegrin and metalloproteases (ADAMs) in the signaling of EGFR-ligand shedding. May be involved in suppression of Ras-induced cellular transformation and Ras-mediated activation of ELK1. Plays a role in the regulation of cell morphology and cytoskeletal organization. This chain is SH3 domain-containing protein 19 (SH3D19), found in Homo sapiens (Human).